The chain runs to 298 residues: Hydroxymethylglutaryl-CoA lyase, mitochondrial (298 aa).

Positions 6–273 constitute a Pyruvate carboxyltransferase domain; sequence VKVVEVGPRD…HTGVDLQKLM (268 aa). Arg14 is a substrate binding site. Asp15 is a binding site for a divalent metal cation. Lys21 carries the N6-acetyllysine modification. 2 residues coordinate a divalent metal cation: His206 and His208. The active site involves Cys239. An a divalent metal cation-binding site is contributed by Asn248. The Microbody targeting signal signature appears at 296–298; it reads CRL.

Belongs to the HMG-CoA lyase family. As to quaternary structure, homodimer; disulfide-linked. Can also form homotetramers.

It localises to the mitochondrion matrix. Its subcellular location is the peroxisome. It carries out the reaction (3S)-3-hydroxy-3-methylglutaryl-CoA = acetoacetate + acetyl-CoA. Its pathway is metabolic intermediate metabolism; (S)-3-hydroxy-3-methylglutaryl-CoA degradation; acetoacetate from (S)-3-hydroxy-3-methylglutaryl-CoA: step 1/1. Functionally, mitochondrial 3-hydroxy-3-methylglutaryl-CoA lyase that catalyzes a cation-dependent cleavage of (S)-3-hydroxy-3-methylglutaryl-CoA into acetyl-CoA and acetoacetate, a key step in ketogenesis. Terminal step in leucine catabolism. Ketone bodies (beta-hydroxybutyrate, acetoacetate and acetone) are essential as an alternative source of energy to glucose, as lipid precursors and as regulators of metabolism. This chain is Hydroxymethylglutaryl-CoA lyase, mitochondrial (HMGCL), found in Gallus gallus (Chicken).